Here is a 129-residue protein sequence, read N- to C-terminus: Small ribosomal subunit protein uS11 (129 aa).

The protein belongs to the universal ribosomal protein uS11 family. Part of the 30S ribosomal subunit. Interacts with proteins S7 and S18. Binds to IF-3.

Functionally, located on the platform of the 30S subunit, it bridges several disparate RNA helices of the 16S rRNA. Forms part of the Shine-Dalgarno cleft in the 70S ribosome. The polypeptide is Small ribosomal subunit protein uS11 (Aeromonas hydrophila subsp. hydrophila (strain ATCC 7966 / DSM 30187 / BCRC 13018 / CCUG 14551 / JCM 1027 / KCTC 2358 / NCIMB 9240 / NCTC 8049)).